The sequence spans 523 residues: Tryptamine 5-hydroxylase (523 aa).

The helical transmembrane segment at 5 to 25 (MASTMSLALLVLSAAYVLVAL) threads the bilayer. Residue Cys-453 coordinates heme.

It belongs to the cytochrome P450 family. The cofactor is heme.

Its subcellular location is the endoplasmic reticulum membrane. The catalysed reaction is tryptamine + reduced [NADPH--hemoprotein reductase] + O2 = serotonin + oxidized [NADPH--hemoprotein reductase] + H2O + H(+). Its function is as follows. Involved in serotonin biosynthesis. Catalyzes the conversion of tryptamine to serotonin. Accumulation of serotonin may play a role in innate immunity. This chain is Tryptamine 5-hydroxylase, found in Oryza sativa subsp. japonica (Rice).